We begin with the raw amino-acid sequence, 905 residues long: Alanine--tRNA ligase (905 aa).

Positions 595, 599, 696, and 700 each coordinate Zn(2+).

The protein belongs to the class-II aminoacyl-tRNA synthetase family. The cofactor is Zn(2+).

It localises to the cytoplasm. The enzyme catalyses tRNA(Ala) + L-alanine + ATP = L-alanyl-tRNA(Ala) + AMP + diphosphate. Its function is as follows. Catalyzes the attachment of alanine to tRNA(Ala) in a two-step reaction: alanine is first activated by ATP to form Ala-AMP and then transferred to the acceptor end of tRNA(Ala). Also edits incorrectly charged Ser-tRNA(Ala) and Gly-tRNA(Ala) via its editing domain. The polypeptide is Alanine--tRNA ligase (Anaeromyxobacter dehalogenans (strain 2CP-C)).